The following is a 243-amino-acid chain: uncharacterized protein (243 aa).

It is found in the nucleus. The protein localises to the nucleolus. This is an uncharacterized protein from Schizosaccharomyces pombe (strain 972 / ATCC 24843) (Fission yeast).